Here is a 467-residue protein sequence, read N- to C-terminus: Glutamate--tRNA ligase (467 aa).

The short motif at 9 to 19 is the 'HIGH' region element; the sequence is PSPTGYLHIGG. The 'KMSKS' region signature appears at 237 to 241; that stretch reads KLSKR. K240 contacts ATP.

Belongs to the class-I aminoacyl-tRNA synthetase family. Glutamate--tRNA ligase type 1 subfamily. Monomer.

It localises to the cytoplasm. The catalysed reaction is tRNA(Glu) + L-glutamate + ATP = L-glutamyl-tRNA(Glu) + AMP + diphosphate. Catalyzes the attachment of glutamate to tRNA(Glu) in a two-step reaction: glutamate is first activated by ATP to form Glu-AMP and then transferred to the acceptor end of tRNA(Glu). This is Glutamate--tRNA ligase from Xanthomonas campestris pv. campestris (strain 8004).